Reading from the N-terminus, the 754-residue chain is Nibrin (754 aa).

The FHA domain occupies 24–83; the sequence is YVVGRKNCAILIEKDQSISRNHAVLTANFSVTNLSQTDEIPVLALKDNSKYGTFVNEEKM. BRCT domains follow at residues 105–181 and 224–315; these read KFRI…TEFL and GKTF…LAVI. The segment at 111–328 is mediates interaction with SP100; it reads EPLVACSSCL…TKNYCDPQGH (218 aa). The interaction with MTOR, MAPKAP1 and RICTOR stretch occupies residues 221 to 402; the sequence is IFKGKTFIFL…FRMLSQDAPT (182 aa). Ser-278 carries the phosphoserine; by ATM modification. Residues 326–346 form a disordered region; sequence QGHPSTGLKTTTPGPSLSQGL. The span at 328-346 shows a compositional bias: polar residues; it reads HPSTGLKTTTPGPSLSQGL. At Thr-337 the chain carries Phosphothreonine. At Ser-343 the chain carries Phosphoserine; by ATM. Ser-347 is subject to Phosphoserine. At Lys-388 the chain carries N6-lactoyllysine. Disordered regions lie at residues 396–415 and 431–475; these read LSQDAPTVKESCKTSSNNNS and LSPT…NQEM. Residue Ser-397 is modified to Phosphoserine. Thr-402 bears the Phosphothreonine mark. Polar residues-rich tracts occupy residues 431-440 and 447-462; these read LSPTKLPSIN and SQQQQTNSIRNYFQPS. Ser-432 carries the phosphoserine modification. Residue Lys-435 forms a Glycyl lysine isopeptide (Lys-Gly) (interchain with G-Cter in ubiquitin) linkage. The Nuclear localization signal motif lies at 461–467; that stretch reads PSTKKRE. 2 positions are modified to phosphoserine: Ser-509 and Ser-518. Glycyl lysine isopeptide (Lys-Gly) (interchain with G-Cter in SUMO2) cross-links involve residues Lys-571 and Lys-582. 2 positions are modified to phosphoserine: Ser-615 and Ser-673. Glycyl lysine isopeptide (Lys-Gly) (interchain with G-Cter in ubiquitin) cross-links involve residues Lys-686, Lys-690, and Lys-735. Positions 740–749 match the FxF/Y motif motif; that stretch reads ADDLFRYNPY.

Belongs to the Nibrin family. Component of the MRN complex composed of two heterodimers RAD50 and MRE11 associated with a single NBN. The MRN complexes dimerize on DNA to form joined MRN-MRN oligomers required for DNA double-strand break repair. The MRN complexes dimerize on DNA to form joined MRN-MRN oligomers required for DNA double-strand break repair. As part of the MRN complex, interacts with MCM9; the interaction recruits the complex to DNA repair sites. Component of the BASC complex, at least composed of BRCA1, MSH2, MSH6, MLH1, ATM, BLM, RAD50, MRE11 and NBN. Interacts with histone H2AX; this requires phosphorylation of H2AX on 'Ser-139' and promotes NBN recruitment to DNA damage sites. Interacts with (phosphorylated) MDC1; promoting NBN recruitment to DNA damage sites. Interacts with (phosphorylated) RAD17; promoting NBN recruitment to DNA damage sites. Interacts (via FxF/Y motif) with ATM. Interacts with HJURP. Interacts with INTS3. Interacts with KPNA2. Interacts with TERF2; interaction is disrupted upon NBN phosphorylation by CDK2. Interacts with (phosphorylated) RBBP8/CtIP; the interaction links the role of the MRN complex in DNA double-strand break sensing to resection. Interacts with SP100; recruits NBN to PML bodies. Interacts with ATF2. Interacts with MTOR, MAPKAP1 isoform 2 and RICTOR; indicative for an association with the mTORC2 complex. Interacts with MRNIP. Interacts with UFL1; promoting UFL1 recruitment to double-strand breaks following DNA damage. Interacts with CYREN (via XLF motif). Phosphorylated by ATM in response of ionizing radiation, and such phosphorylation is responsible intra-S phase checkpoint control and telomere maintenance. Phosphorylated at Ser-432 by CDK2 in S/G2 phases abolishes interaction with TERF2, enabling DCLRE1B/Apollo recruitment to telomeres. Phosphorylation at Ser-432 in response to dysfunctional telomeres promotes non-homologous end joining repair at telomeres, while dephosphorylation by PPP1CA promotes microhomology-mediated end-joining (MMEJ) repair. Post-translationally, ubiquitinated at Lys-435 via 'Lys-6'-linked ubiquitin chains by RNF8, promoting NBN recruitment to DNA double-strand breaks (DSBs). Ubiquitinated at Lys-686 and Lys-689 via 'Lys-63'-linked ubiquitin chains by PELI1: ubiquitination takes place following PELI1 phosphorylation and promotes ATM activation and DNA repair. Ubiquitinated at Lys-735 via 'Lys-63'-linked ubiquitin chains by the SCF(SKP2) complex: ubiquitination takes place following SKP2 phosphorylation and promotes ATM activation and DNA repair. In terms of processing, lactylation at Lys-388 by KAT5 in response to DNA damage promotes recruitment of the MRN complex to DNA damage sites. Delactylated by HDAC3.

Its subcellular location is the nucleus. The protein resides in the chromosome. It is found in the PML body. The protein localises to the telomere. Its function is as follows. Component of the MRN complex, which plays a central role in double-strand break (DSB) repair, DNA recombination, maintenance of telomere integrity and meiosis. The MRN complex is involved in the repair of DNA double-strand breaks (DSBs) via homologous recombination (HR), an error-free mechanism which primarily occurs during S and G2 phases. The complex (1) mediates the end resection of damaged DNA, which generates proper single-stranded DNA, a key initial steps in HR, and is (2) required for the recruitment of other repair factors and efficient activation of ATM and ATR upon DNA damage. The MRN complex possesses single-strand endonuclease activity and double-strand-specific 3'-5' exonuclease activity, which are provided by MRE11, to initiate end resection, which is required for single-strand invasion and recombination. Within the MRN complex, NBN acts as a protein-protein adapter, which specifically recognizes and binds phosphorylated proteins, promoting their recruitment to DNA damage sites. Recruits MRE11 and RAD50 components of the MRN complex to DSBs in response to DNA damage. Promotes the recruitment of PI3/PI4-kinase family members ATM, ATR, and probably DNA-PKcs to the DNA damage sites, activating their functions. Mediates the recruitment of phosphorylated RBBP8/CtIP to DSBs, leading to cooperation between the MRN complex and RBBP8/CtIP to initiate end resection. RBBP8/CtIP specifically promotes the endonuclease activity of the MRN complex to clear DNA ends containing protein adducts. The MRN complex is also required for the processing of R-loops. NBN also functions in telomere length maintenance via its interaction with TERF2: interaction with TERF2 during G1 phase preventing recruitment of DCLRE1B/Apollo to telomeres. NBN also promotes DNA repair choice at dysfunctional telomeres: NBN phosphorylation by CK2 promotes non-homologous end joining repair at telomeres, while unphosphorylated NBN promotes microhomology-mediated end-joining (MMEJ) repair. Enhances AKT1 phosphorylation possibly by association with the mTORC2 complex. This chain is Nibrin (NBN), found in Pongo abelii (Sumatran orangutan).